Reading from the N-terminus, the 685-residue chain is ATP-dependent zinc metalloprotease FTSH 8, chloroplastic (685 aa).

Residues 1–37 (MAASSACLLGNGLSVYTTKQRFQKLGLDRTSKVTVVK) constitute a chloroplast transit peptide. Residues 38 to 73 (ASLDEKKHEGRRGFFKLLLGNAAAGVGLLASGNANA) constitute a thylakoid transit peptide. At 38–161 (ASLDEKKHEG…HNAQEDQGSP (124 aa)) the chain is on the lumenal, thylakoid side. Residues 162-182 (ILNLIGNLAFPVILIGGLFLL) traverse the membrane as a helical segment. Topologically, residues 183–685 (SRRSSGGMGG…STSTPTPASV (503 aa)) are stromal. ATP is bound at residue 260-267 (GPPGTGKT). A Zn(2+)-binding site is contributed by H481. E482 is a catalytic residue. 2 residues coordinate Zn(2+): H485 and D559.

This sequence in the N-terminal section; belongs to the AAA ATPase family. The protein in the C-terminal section; belongs to the peptidase M41 family. In terms of assembly, heterohexamers with FTSH1, FTSH2 and FTSH5. May also form homooligomers. Zn(2+) serves as cofactor. Expressed in cotyledons, cauline and rosette leaves, stems, sepals, flovers and siliques. Very low in roots.

The protein resides in the plastid. It is found in the chloroplast thylakoid membrane. Part of a complex that function as an ATP-dependent zinc metallopeptidase. Involved in the thylakoid formation and in the removal of damaged D1 in the photosystem II, preventing cell death under high-intensity light conditions. The polypeptide is ATP-dependent zinc metalloprotease FTSH 8, chloroplastic (FTSH8) (Arabidopsis thaliana (Mouse-ear cress)).